The following is a 473-amino-acid chain: Serine incorporator 3 (473 aa).

Over 1–96 the chain is Extracellular; sequence MGAVLGVFSL…KDCDVLVGYK (96 aa). The N-linked (GlcNAc...) asparagine glycan is linked to Asn-34. The helical transmembrane segment at 97-117 threads the bilayer; that stretch reads AVYRISFAMAIFFFVFSLLMF. At 118–132 the chain is on the cytoplasmic side; sequence KVKTSKDLRAAVHNG. The chain crosses the membrane as a helical span at residues 133-153; sequence FWFFKIAALIGIMVGSFYIPG. Topologically, residues 154–159 are extracellular; the sequence is GYFSSV. The helical transmembrane segment at 160 to 180 threads the bilayer; it reads WFVVGMIGAALFILIQLVLLV. At 181–203 the chain is on the cytoplasmic side; the sequence is DFAHSWNESWVNRMEEGNPRLWY. A helical transmembrane segment spans residues 204-224; sequence AALLSFTSAFYILSIICVGLL. Residues 225-239 are Extracellular-facing; sequence YTYYTKPDGCTENKF. A helical membrane pass occupies residues 240 to 260; sequence FISINLILCVVASIISIHPKI. Topologically, residues 261-329 are cytoplasmic; that stretch reads QEHQPRSGLL…VPTPTPPSKS (69 aa). A helical membrane pass occupies residues 330 to 350; the sequence is GSLLDSDNFIGLFVFVLCLLY. The Extracellular portion of the chain corresponds to 351 to 406; sequence SSIRTSTNSQVDKLTLSGSDSVILGDTTTSGASDEEDGQPRRAVDNEKEGVQYSYS. Position 371 is a phosphoserine (Ser-371). The chain crosses the membrane as a helical span at residues 407–427; the sequence is LFHLMLCLASLYIMMTLTSWY. Residues 428 to 446 lie on the Cytoplasmic side of the membrane; sequence SPDAKFQSMTSKWPAVWVK. Residues 447-467 form a helical membrane-spanning segment; sequence ISSSWVCLLLYVWTLVAPLVL. Residues 468–473 lie on the Extracellular side of the membrane; it reads TSRDFS.

Belongs to the TDE1 family. N-glycosylated. Ubiquitous. Expression levels were increased fourfold to tenfold in lung tumor tissues compared with normal pulmonary tissues.

The protein resides in the cell membrane. The protein localises to the golgi apparatus membrane. Its subcellular location is the cytoplasm. It is found in the perinuclear region. The catalysed reaction is a 1,2-diacyl-sn-glycero-3-phospho-L-serine(in) = a 1,2-diacyl-sn-glycero-3-phospho-L-serine(out). It catalyses the reaction a 1,2-diacyl-sn-glycero-3-phosphocholine(in) = a 1,2-diacyl-sn-glycero-3-phosphocholine(out). It carries out the reaction a 1,2-diacyl-sn-glycero-3-phosphoethanolamine(in) = a 1,2-diacyl-sn-glycero-3-phosphoethanolamine(out). Its function is as follows. Restriction factor required to restrict infectivity of lentiviruses, such as HIV-1: acts by inhibiting an early step of viral infection. Impairs the penetration of the viral particle into the cytoplasm. Non-ATP-dependent, non-specific lipid transporter for phosphatidylserine, phosphatidylcholine, and phosphatidylethanolamine. Functions as a scramblase that flips lipids in both directions across the membrane. Phospholipid scrambling results in HIV-1 surface exposure of phosphatidylserine and loss of membrane asymmetry, which leads to changes in HIV-1 Env conformation and loss of infectivity. This Homo sapiens (Human) protein is Serine incorporator 3.